Here is a 109-residue protein sequence, read N- to C-terminus: UPF0060 membrane protein RHA1_ro06609 (109 aa).

A run of 4 helical transmembrane segments spans residues 7–27 (VALF…VWQG), 33–53 (GWIW…VATL), 62–82 (ILAA…MVAD), and 88–108 (RWDV…MYAP).

The protein belongs to the UPF0060 family.

It localises to the cell membrane. In Rhodococcus jostii (strain RHA1), this protein is UPF0060 membrane protein RHA1_ro06609.